A 33-amino-acid polypeptide reads, in one-letter code: Mu/omega-theraphotoxin-Tap2a (33 aa).

Disulfide bonds link C2-C17, C9-C22, and C16-C29.

It belongs to the neurotoxin 10 (Hwtx-1) family. 59 (Tltx) subfamily. In terms of tissue distribution, expressed by the venom gland.

Its subcellular location is the secreted. Its function is as follows. Gating-modifier toxin that inhibits both sodium (Nav) and calcium (Cav3) channels by inducing hyperpolarizing shift in voltage-dependence of activation and steady state inactivation. Inhibits Nav1.1/SCN1A, Nav1.2/SCN2A, Nav1.6/SCN6A, Nav1.7/SCN9A and Cav3.1/CACNA1G sodium and calcium channels at nanomolar concentrations (IC(50)=169-621 nM). Surprisingly, selectively slows fast inactivation of Nav1.3/SCN3A. Also shows moderate inhibition of Nav1.3/SCN3A sodium channels (IC(50)=1216 nM). The polypeptide is Mu/omega-theraphotoxin-Tap2a (Theraphosa apophysis (Goliath pinkfoot tarantula)).